An 84-amino-acid polypeptide reads, in one-letter code: Small ribosomal subunit protein eS27-like (84 aa).

Residues 1 to 16 (MPLARDLLHPSLEEEK) show a composition bias toward basic and acidic residues. Positions 1-23 (MPLARDLLHPSLEEEKKKHKKKR) are disordered. The C4-type zinc-finger motif lies at 38–60 (PGCYKITTVFSHAQTVVLCVGCS).

This sequence belongs to the eukaryotic ribosomal protein eS27 family. It depends on Zn(2+) as a cofactor.

This is Small ribosomal subunit protein eS27-like from Mus musculus (Mouse).